The sequence spans 407 residues: Ornithine cyclodeaminase (407 aa).

10 residues coordinate NAD(+): Asn233, Ala234, Asp312, Thr344, Met345, Leu346, His347, Asp365, Asp388, and Val389.

This sequence belongs to the AgrE/ArgZ ornithine cyclodeaminase family. It depends on NAD(+) as a cofactor.

It carries out the reaction L-ornithine = L-proline + NH4(+). In terms of biological role, catalyzes the conversion of ornithine to proline, with the release of ammonia. This is Ornithine cyclodeaminase from Archaeoglobus fulgidus (strain ATCC 49558 / DSM 4304 / JCM 9628 / NBRC 100126 / VC-16).